The chain runs to 579 residues: Insulin-like growth factor 2 mRNA-binding protein 3 (579 aa).

RRM domains follow at residues 2 to 75 and 81 to 156; these read NKLY…HSVP and RKLQ…YIPD. The disordered stretch occupies residues 160–192; that stretch reads AQQNPLQQPRGRRGLGQRGSSRQGSPGSVSKQK. Residues 177–187 show a composition bias toward low complexity; that stretch reads RGSSRQGSPGS. Ser-184 is modified (phosphoserine). KH domains are found at residues 195–260, 276–343, and 405–470; these read DLPL…CKSI, EIPL…EEEI, and TETV…QGRI. Residues Lys-450 and Lys-475 each participate in a glycyl lysine isopeptide (Lys-Gly) (interchain with G-Cter in SUMO2) cross-link. The KH 4 domain occupies 487–553; sequence KLEAHIRVPS…YACQVAQRKI (67 aa). Thr-528 is subject to Phosphothreonine.

The protein belongs to the RRM IMP/VICKZ family. As to quaternary structure, can form homooligomers and heterooligomers with IGF2BP1 and IGF2BP3 in an RNA-dependent manner. Interacts with IGF2BP1. Interacts with ELAVL1, DHX9, HNRNPU, MATR3 and PABPC1. In terms of tissue distribution, expressed in fetal liver, fetal lung, fetal kidney, fetal thymus, fetal placenta, fetal follicles of ovary and gonocytes of testis, growing oocytes, spermatogonia and semen (at protein level). Expressed in cervix adenocarcinoma, in testicular, pancreatic and renal-cell carcinomas (at protein level). Expressed ubiquitously during fetal development at 8 and 14 weeks of gestation. Expressed in ovary, testis, brain, placenta, pancreatic cancer tissues and pancreatic cancer cell lines.

The protein resides in the nucleus. The protein localises to the cytoplasm. Its subcellular location is the P-body. It localises to the stress granule. In terms of biological role, RNA-binding factor that may recruit target transcripts to cytoplasmic protein-RNA complexes (mRNPs). This transcript 'caging' into mRNPs allows mRNA transport and transient storage. It also modulates the rate and location at which target transcripts encounter the translational apparatus and shields them from endonuclease attacks or microRNA-mediated degradation. Preferentially binds to N6-methyladenosine (m6A)-containing mRNAs and increases their stability. Binds to the 3'-UTR of CD44 mRNA and stabilizes it, hence promotes cell adhesion and invadopodia formation in cancer cells. Binds to beta-actin/ACTB and MYC transcripts. Increases MYC mRNA stability by binding to the coding region instability determinant (CRD) and binding is enhanced by m6A-modification of the CRD. Binds to the 5'-UTR of the insulin-like growth factor 2 (IGF2) mRNAs. The chain is Insulin-like growth factor 2 mRNA-binding protein 3 (IGF2BP3) from Homo sapiens (Human).